Here is a 165-residue protein sequence, read N- to C-terminus: Trypsin alpha-3 (165 aa).

In terms of domain architecture, Peptidase S1 spans 1-163; it reads NSGGVLVSVA…LRSWVVSAAN (163 aa). D26 serves as the catalytic Charge relay system. Disulfide bonds link C89–C106 and C115–C139. S119 (charge relay system) is an active-site residue.

It belongs to the peptidase S1 family.

The protein localises to the secreted. It localises to the extracellular space. The catalysed reaction is Preferential cleavage: Arg-|-Xaa, Lys-|-Xaa.. This chain is Trypsin alpha-3, found in Lucilia cuprina (Green bottle fly).